Reading from the N-terminus, the 156-residue chain is dCTP deaminase (156 aa).

DCTP contacts are provided by residues 79 to 84, Asp95, Gln124, and Tyr138; that span reads RSTFAR.

This sequence belongs to the dCTP deaminase family. In terms of assembly, homotrimer.

The catalysed reaction is dCTP + H2O + H(+) = dUTP + NH4(+). It participates in pyrimidine metabolism; dUMP biosynthesis; dUMP from dCTP (dUTP route): step 1/2. Catalyzes the deamination of dCTP to dUTP. The sequence is that of dCTP deaminase from Thermococcus sibiricus (strain DSM 12597 / MM 739).